A 178-amino-acid polypeptide reads, in one-letter code: Putative type II secretion system M-type protein YghD (178 aa).

The Cytoplasmic segment spans residues 1–39 (MLRDKFIHYFQQWRERQLSRGEHWLAQHLAGRSPREKGM). Residues 40-60 (LLAAVVFLFSVGYYVLIWQPL) form a helical membrane-spanning segment. Over 61–178 (SERIEQQETI…NVQRLEFGRG (118 aa)) the chain is Periplasmic.

This sequence belongs to the GSP M family.

It is found in the cell inner membrane. Its function is as follows. Involved in a type II secretion system (T2SS, formerly general secretion pathway, GSP) for the export of folded proteins across the outer membrane. In Escherichia coli (strain K12), this protein is Putative type II secretion system M-type protein YghD (yghD).